The following is a 2344-amino-acid chain: Genome polyprotein (2344 aa).

The SF3 helicase domain maps to 492 to 653 (QKVISDLHTM…ESWQATRHGS (162 aa)). Position 522–529 (522–529 (GAPGIGKT)) interacts with ATP. At Tyr1014 the chain carries O-(5'-phospho-RNA)-tyrosine. An O-UMP-tyrosine; transient modification is found at Tyr1014. Residues 1109–1244 (GLPGFMRHNG…SKMCTLIDLT (136 aa)) form the Peptidase C24 domain. Active-site for 3CLpro activity residues include His1135, Asp1152, and Cys1212. Positions 1495–1619 (SDFLCLDYSK…AMTPMMVSLL (125 aa)) constitute a RdRp catalytic domain. Residues Cys1584 and Cys1591 are joined by a disulfide bond. The segment at 1774 to 1796 (PQGEAARTATTASVPGTTTDGMD) is disordered. Residues 1781-1792 (TATTASVPGTTT) show a composition bias toward low complexity.

As to quaternary structure, homodimer. In terms of assembly, homomultimer. Interacts with host type II histo-blood group structures antigens at the surface of target cells. Mn(2+) serves as cofactor. Post-translationally, specific enzymatic cleavages by its own cysteine protease yield mature proteins. The protease cleaves itself from the nascent polyprotein autocatalytically. Precursor p41 can be cleaved by viral 3CLpro into protein p19 and VPg, or cleaved by host protease into protein p23/2 and protein p18. In terms of processing, VPg is uridylylated by the polymerase and is covalently attached to the 5'-end of the polyadenylated genomic and subgenomic RNAs. This uridylylated form acts as a nucleotide-peptide primer for the polymerase.

The protein resides in the host cytoplasm. Its subcellular location is the host endoplasmic reticulum. It is found in the virion. It catalyses the reaction a ribonucleoside 5'-triphosphate + H2O = a ribonucleoside 5'-diphosphate + phosphate + H(+). The catalysed reaction is Endopeptidase with a preference for cleavage when the P1 position is occupied by Glu-|-Xaa and the P1' position is occupied by Gly-|-Yaa.. The enzyme catalyses RNA(n) + a ribonucleoside 5'-triphosphate = RNA(n+1) + diphosphate. Its function is as follows. Together with NTPase and NS4, initiates the formation of the replication complex. Induces the proliferation of the host smooth ER membranes forming long tubular structures. These remodeled membranes probably form the viral factories that contain the replication complex. In terms of biological role, displays NTPase activity, but no helicase activity. Induces the formation of convoluted membranes derived from the host ER. These remodeled membranes probably form the viral factories that contain the replication complex. Together with NS2 and NS4, initiates the formation of the replication complex. Functionally, probable key protein responsible for the formation of membrane alterations by the virus. Induces the formation of convoluted membranes derived from the host ER. These remodeled membranes probably form the viral factories that contain the replication complex. Together with NS2 and NTPase, initiates the formation of the replication complex. Viral genome-linked protein is covalently linked to the 5'-end of the positive-strand, negative-strand genomic RNAs and subgenomic RNA. Acts as a genome-linked replication primer. May recruit ribosome to viral RNA thereby promoting viral proteins translation. Interacts with host translation initiation complex to allow the translation of viral proteins. Its function is as follows. Processes the polyprotein. 3CLpro-RdRp is first released by autocleavage, then all other proteins are cleaved. May cleave polyadenylate-binding protein thereby inhibiting cellular translation. In terms of biological role, replicates genomic and antigenomic RNA by recognizing replications specific signals. Also transcribes a subgenomic mRNA by initiating RNA synthesis internally on antigenomic RNA. This sgRNA codes for structural proteins. Catalyzes the covalent attachment VPg with viral RNAs. Functionally, capsid protein VP60 self assembles to form an icosahedral capsid with a T=3 symmetry, about 35 nm in diameter, and consisting of 180 capsid proteins. A smaller form of capsid with a diameter of 23 nm might be capsid proteins assembled as icosahedron with T=1 symmetry. The capsid encapsulate VP2 proteins and genomic or subgenomic RNA. Attaches virion to target cells by binding histo-blood group antigens, inducing endocytosis of the viral particle. Acidification of the endosome induces conformational change of capsid protein thereby injecting virus genomic RNA into host cytoplasm. In Oryctolagus cuniculus (Rabbit), this protein is Genome polyprotein.